The chain runs to 279 residues: Putative E3 ubiquitin-protein ligase C36B7.05c (279 aa).

Residues 27-122 (DDESAQCNNC…VCVNCRQQLS (96 aa)) form an FYVE-type zinc finger. Residues C33, C36, C49, C52, C57, C60, C114, and C117 each coordinate Zn(2+). S200 carries the phosphoserine modification. The RING-type; atypical zinc finger occupies 230-273 (CIICFEEFAAGDRVARIEYCLCIFHLKCYRDWLSTGAAGCPVHA).

It localises to the cytoplasm. The protein localises to the nucleus. Its subcellular location is the endosome membrane. It is found in the vacuole membrane. It carries out the reaction S-ubiquitinyl-[E2 ubiquitin-conjugating enzyme]-L-cysteine + [acceptor protein]-L-lysine = [E2 ubiquitin-conjugating enzyme]-L-cysteine + N(6)-ubiquitinyl-[acceptor protein]-L-lysine.. The protein operates within protein modification; protein ubiquitination. In terms of biological role, functions as an E3 ubiquitin-protein ligase. Binds phospholipid vesicles containing phosphatidylinositol 3-phosphate. This chain is Putative E3 ubiquitin-protein ligase C36B7.05c, found in Schizosaccharomyces pombe (strain 972 / ATCC 24843) (Fission yeast).